A 176-amino-acid polypeptide reads, in one-letter code: PKHD-type hydroxylase Mfla_0096 (176 aa).

In terms of domain architecture, Fe2OG dioxygenase spans 78 to 147 (KVFPPLFNRY…NQIARGTYGA (70 aa)).

It depends on Fe(2+) as a cofactor. L-ascorbate is required as a cofactor.

This is PKHD-type hydroxylase Mfla_0096 from Methylobacillus flagellatus (strain ATCC 51484 / DSM 6875 / VKM B-1610 / KT).